The following is a 68-amino-acid chain: UPF0253 protein VFMJ11_0680 (68 aa).

Belongs to the UPF0253 family.

The sequence is that of UPF0253 protein VFMJ11_0680 from Aliivibrio fischeri (strain MJ11) (Vibrio fischeri).